Here is a 450-residue protein sequence, read N- to C-terminus: tRNA modification GTPase MnmE (450 aa).

(6S)-5-formyl-5,6,7,8-tetrahydrofolate is bound by residues R20, E78, and K117. Residues 211–372 (GLRMVIVGKP…LEESIYRETQ (162 aa)) form the TrmE-type G domain. Position 221 (N221) interacts with K(+). Residues 221–226 (NVGKST), 240–246 (TDIPGTT), and 265–268 (DTAG) each bind GTP. Position 225 (S225) interacts with Mg(2+). K(+)-binding residues include T240, I242, and T245. Position 246 (T246) interacts with Mg(2+). Residue K450 coordinates (6S)-5-formyl-5,6,7,8-tetrahydrofolate.

Belongs to the TRAFAC class TrmE-Era-EngA-EngB-Septin-like GTPase superfamily. TrmE GTPase family. Homodimer. Heterotetramer of two MnmE and two MnmG subunits. Requires K(+) as cofactor.

The protein resides in the cytoplasm. Its function is as follows. Exhibits a very high intrinsic GTPase hydrolysis rate. Involved in the addition of a carboxymethylaminomethyl (cmnm) group at the wobble position (U34) of certain tRNAs, forming tRNA-cmnm(5)s(2)U34. This is tRNA modification GTPase MnmE from Thermotoga sp. (strain RQ2).